The primary structure comprises 145 residues: Ribosomal RNA large subunit methyltransferase H (145 aa).

Residues Leu-64, Gly-93, and Leu-112–Phe-117 each bind S-adenosyl-L-methionine.

The protein belongs to the RNA methyltransferase RlmH family. As to quaternary structure, homodimer.

The protein resides in the cytoplasm. It carries out the reaction pseudouridine(1915) in 23S rRNA + S-adenosyl-L-methionine = N(3)-methylpseudouridine(1915) in 23S rRNA + S-adenosyl-L-homocysteine + H(+). Its function is as follows. Specifically methylates the pseudouridine at position 1915 (m3Psi1915) in 23S rRNA. This is Ribosomal RNA large subunit methyltransferase H from Prochlorococcus marinus (strain MIT 9211).